The primary structure comprises 436 residues: Alpha-galactosidase mel1 (436 aa).

A signal peptide spans 1–24 (MISISFLNCFFLVFLFLFFSDVHG). Cys45 and Cys77 are joined by a disulfide. A glycan (N-linked (GlcNAc...) asparagine) is linked at Asn84. Residues Cys126 and Cys156 are joined by a disulfide bond. Catalysis depends on Asp154, which acts as the Nucleophile. Residue Asn180 is glycosylated (N-linked (GlcNAc...) asparagine). Catalysis depends on Asp214, which acts as the Proton donor.

Belongs to the glycosyl hydrolase 27 family.

Its subcellular location is the endoplasmic reticulum lumen. It localises to the secreted. The catalysed reaction is Hydrolysis of terminal, non-reducing alpha-D-galactose residues in alpha-D-galactosides, including galactose oligosaccharides, galactomannans and galactolipids.. In terms of biological role, secreted alpha-galactosidase required for catabolic conversion of melibiose to glucose and galactose. The protein is Alpha-galactosidase mel1 (mel1) of Schizosaccharomyces pombe (strain 972 / ATCC 24843) (Fission yeast).